We begin with the raw amino-acid sequence, 186 residues long: Mitoferrin-2A (186 aa).

The Solcar repeat unit spans residues 75–163 (SNVTTHMLAG…FACYEKLKKT (89 aa)). Helical transmembrane passes span 77 to 96 (VTTH…CLMY), 137 to 157 (RGLN…FACY), and 172 to 185 (GNSH…YSCP).

This sequence belongs to the mitochondrial carrier (TC 2.A.29) family.

It localises to the mitochondrion inner membrane. The enzyme catalyses Fe(2+)(in) = Fe(2+)(out). Mitochondrial iron transporter that mediates iron uptake. Probably required for heme synthesis of hemoproteins and Fe-S cluster assembly in non-erythroid cells. This Xenopus laevis (African clawed frog) protein is Mitoferrin-2A (slc25a28-a).